Reading from the N-terminus, the 209-residue chain is Putative 3-methyladenine DNA glycosylase (209 aa).

The interval 189-209 is disordered; sequence YISKTQPGPPPKKRKKGLESS. Residues 199-209 are compositionally biased toward basic residues; sequence PKKRKKGLESS.

The protein belongs to the DNA glycosylase MPG family.

The chain is Putative 3-methyladenine DNA glycosylase from Chlorobaculum tepidum (strain ATCC 49652 / DSM 12025 / NBRC 103806 / TLS) (Chlorobium tepidum).